Reading from the N-terminus, the 125-residue chain is Ribonuclease P protein component (125 aa).

This sequence belongs to the RnpA family. In terms of assembly, consists of a catalytic RNA component (M1 or rnpB) and a protein subunit.

It catalyses the reaction Endonucleolytic cleavage of RNA, removing 5'-extranucleotides from tRNA precursor.. RNaseP catalyzes the removal of the 5'-leader sequence from pre-tRNA to produce the mature 5'-terminus. It can also cleave other RNA substrates such as 4.5S RNA. The protein component plays an auxiliary but essential role in vivo by binding to the 5'-leader sequence and broadening the substrate specificity of the ribozyme. The polypeptide is Ribonuclease P protein component (Rhodococcus jostii (strain RHA1)).